We begin with the raw amino-acid sequence, 370 residues long: Glutathione S-transferase omega-like 2 (370 aa).

Arginine 15 is a binding site for glutathione. The active-site Nucleophile is cysteine 46. Glutathione contacts are provided by tryptophan 79, arginine 155, valine 158, glutamate 173, and serine 174. The 153-residue stretch at 201-353 folds into the GST C-terminal domain; it reads PAQLKTQIDD…LHYTRSHTRI (153 aa).

The protein belongs to the GST superfamily. Omega family. In terms of assembly, homodimer.

The protein localises to the cytoplasm. The catalysed reaction is RX + glutathione = an S-substituted glutathione + a halide anion + H(+). It catalyses the reaction L-dehydroascorbate + 2 glutathione = glutathione disulfide + L-ascorbate. Functionally, active as '1-Cys' thiol transferase against beta-hydroxyethyl disulfide (HED), as dehydroascorbate reductase and as dimethylarsinic acid reductase, while not active against the standard GST substrate 1-chloro-2,4-dinitrobenzene (CDNB). May be involved in cell wall organization and biogenesis. In Saccharomyces cerevisiae (strain ATCC 204508 / S288c) (Baker's yeast), this protein is Glutathione S-transferase omega-like 2.